The sequence spans 686 residues: DNA ligase (686 aa).

Residues 33–37, 82–83, and Glu-122 contribute to the NAD(+) site; these read DSVYD and SL. Lys-124 acts as the N6-AMP-lysine intermediate in catalysis. Arg-145, Glu-182, Lys-300, and Lys-324 together coordinate NAD(+). Residues Cys-418, Cys-421, Cys-436, and Cys-441 each coordinate Zn(2+). One can recognise a BRCT domain in the interval 600-686; it reads AVSQILAGKK…PTVESGDLHP (87 aa).

This sequence belongs to the NAD-dependent DNA ligase family. LigA subfamily. Mg(2+) is required as a cofactor. Mn(2+) serves as cofactor.

It carries out the reaction NAD(+) + (deoxyribonucleotide)n-3'-hydroxyl + 5'-phospho-(deoxyribonucleotide)m = (deoxyribonucleotide)n+m + AMP + beta-nicotinamide D-nucleotide.. Functionally, DNA ligase that catalyzes the formation of phosphodiester linkages between 5'-phosphoryl and 3'-hydroxyl groups in double-stranded DNA using NAD as a coenzyme and as the energy source for the reaction. It is essential for DNA replication and repair of damaged DNA. In Synechococcus sp. (strain JA-2-3B'a(2-13)) (Cyanobacteria bacterium Yellowstone B-Prime), this protein is DNA ligase.